A 654-amino-acid chain; its full sequence is Protein THALLO (654 aa).

The segment covering 1-16 (MGKKGGTLKRSSKSTK) has biased composition (basic residues). 3 disordered regions span residues 1 to 23 (MGKK…DIVE), 35 to 145 (KQRD…SDDE), and 164 to 212 (SITA…KDTH). Residues 2–9 (GKKGGTLK) carry the Nuclear localization signal 1 motif. Composition is skewed to acidic residues over residues 44–56 (VNDD…EDDV), 64–82 (GVDD…EEAE), and 103–114 (GDDEMADDDKDK). A coiled-coil region spans residues 140 to 160 (LSSDDEDIKAEEEEVIRLRAE). A compositionally biased stretch (acidic residues) spans 171–181 (GLDDDSEEDSD). The segment covering 182-212 (RELTMEEISDKGKQATKSITDKKEKGDKDTH) has biased composition (basic and acidic residues). Residues 243-263 (LSELNDAVEELESKINPVMNK) adopt a coiled-coil conformation. Disordered stretches follow at residues 362 to 397 (SDSV…HQND), 470 to 492 (VSTK…DDIG), and 509 to 654 (KSSE…SIRM). Over residues 364 to 387 (SVDRITQDTAKPMKIDNAREEKKK) the composition is skewed to basic and acidic residues. The span at 524–546 (SDDEDDNDGDNNDMVDNDGESED) shows a compositional bias: acidic residues. A compositionally biased stretch (basic residues) spans 552–561 (VKQKQQAKRA). The span at 588–599 (SNQMVSNRGLTR) shows a compositional bias: polar residues. A Nuclear localization signal 2 motif is present at residues 608 to 615 (PRKKYRKN). A compositionally biased stretch (polar residues) spans 645–654 (NPNTSRSIRM).

The protein belongs to the SAS10 family. In terms of assembly, interacts with NUCL1, NUCL2, JMJ14, NOF1 and MPP10 in the nucleus. As to expression, mainly present in tissues undergoing rapid cellular growth and differentiation. Mostly expressed in shoots and flowers, and, to a lower extent, in leaves, siliques, roots and seedlings.

It localises to the nucleus. It is found in the nucleolus. Essential protein during embryogenesis. Involved both in gene transcription regulation and in processing events critical for proper rRNA biogenesis and nucleolar organization during reproduction; contributes to pre-rRNA processing at the 5' external transcribed spacer. Binds RNA. In Arabidopsis thaliana (Mouse-ear cress), this protein is Protein THALLO.